A 212-amino-acid chain; its full sequence is Pyridoxine/pyridoxamine 5'-phosphate oxidase (212 aa).

Substrate-binding positions include 8-11 (RRNY) and lysine 66. FMN is bound by residues 61–66 (RIVLLK), 76–77 (FT), arginine 82, lysine 83, and glutamine 105. Substrate contacts are provided by tyrosine 123, arginine 127, and serine 131. Residues 140 to 141 (QS) and tryptophan 184 each bind FMN. 190-192 (RLH) contributes to the substrate binding site. FMN is bound at residue arginine 194.

The protein belongs to the pyridoxamine 5'-phosphate oxidase family. In terms of assembly, homodimer. It depends on FMN as a cofactor.

It carries out the reaction pyridoxamine 5'-phosphate + O2 + H2O = pyridoxal 5'-phosphate + H2O2 + NH4(+). It catalyses the reaction pyridoxine 5'-phosphate + O2 = pyridoxal 5'-phosphate + H2O2. The protein operates within cofactor metabolism; pyridoxal 5'-phosphate salvage; pyridoxal 5'-phosphate from pyridoxamine 5'-phosphate: step 1/1. It functions in the pathway cofactor metabolism; pyridoxal 5'-phosphate salvage; pyridoxal 5'-phosphate from pyridoxine 5'-phosphate: step 1/1. Catalyzes the oxidation of either pyridoxine 5'-phosphate (PNP) or pyridoxamine 5'-phosphate (PMP) into pyridoxal 5'-phosphate (PLP). The chain is Pyridoxine/pyridoxamine 5'-phosphate oxidase from Cupriavidus metallidurans (strain ATCC 43123 / DSM 2839 / NBRC 102507 / CH34) (Ralstonia metallidurans).